The chain runs to 236 residues: Small ribosomal subunit protein uS3 (236 aa).

Positions Ile39–His107 constitute a KH type-2 domain. Positions Glu216–Ala236 are disordered.

The protein belongs to the universal ribosomal protein uS3 family. Part of the 30S ribosomal subunit. Forms a tight complex with proteins S10 and S14.

Its function is as follows. Binds the lower part of the 30S subunit head. Binds mRNA in the 70S ribosome, positioning it for translation. The protein is Small ribosomal subunit protein uS3 of Bartonella henselae (strain ATCC 49882 / DSM 28221 / CCUG 30454 / Houston 1) (Rochalimaea henselae).